Here is a 105-residue protein sequence, read N- to C-terminus: UPF0235 protein RT0827 (105 aa).

This sequence belongs to the UPF0235 family.

In Rickettsia typhi (strain ATCC VR-144 / Wilmington), this protein is UPF0235 protein RT0827.